The primary structure comprises 520 residues: MRRIKPLSEDLIRKIAAGEVVERPANVLKELIENAIDAGSDRIDIFIEKGGKRLIQVVDNGEGIHPDDMLDCVKRYTTSKISSEDDLYSISSYGFRGEALYSISSVSKFSIVSRPEDLSVGKELYIEGGVFRSFTETGAPVGTKVRVKDIFFNTPVRKKFLKSERTEFVHCLKTFINYAVVNTDIHFRLYHNGRELMNLPPSDLKKRITYIYPELSGRLLELDYTDETGRIYGYISTDERFKKEGIVYVNKRPVKNRELRKIIKSLISEKFYVLFIELPPYFVDHNVHPAKIEVKFKNDTAVKNLVREGLKALETPFKKGVTFDYTVSQRKGSYGKEKVFDLLGQVENTFIVVYYDGDIYLIDQHVVHERINYEILMEDLREDGFIKRKILNRNITHSISELEKALIEDKKGTLERSGFSFDIDGYNLVIKEIPVFVSEDQALDIFFRILMDEDAETVDYVIGEIACKLSVKSGDILSDEKAKLILKRWFETDSPNLCPHGRPVYYKVSIDDVKKAIGRG.

This sequence belongs to the DNA mismatch repair MutL/HexB family.

In terms of biological role, this protein is involved in the repair of mismatches in DNA. It is required for dam-dependent methyl-directed DNA mismatch repair. May act as a 'molecular matchmaker', a protein that promotes the formation of a stable complex between two or more DNA-binding proteins in an ATP-dependent manner without itself being part of a final effector complex. This Persephonella marina (strain DSM 14350 / EX-H1) protein is DNA mismatch repair protein MutL.